A 135-amino-acid chain; its full sequence is Large ribosomal subunit protein uL16c (135 aa).

This sequence belongs to the universal ribosomal protein uL16 family. Part of the 50S ribosomal subunit.

It is found in the plastid. The protein resides in the chloroplast. The polypeptide is Large ribosomal subunit protein uL16c (Nymphaea alba (White water-lily)).